We begin with the raw amino-acid sequence, 73 residues long: Homeodomain-only protein (73 aa).

Positions 3–62 (TETASGPTEDQVEILEYNFNKVNKHPDPTTLCLIAAEAGLSEEETQKWFKQRLAQWRRSE) form a DNA-binding region, homeobox; degenerate.

As to quaternary structure, interacts with serum response factor (SRF). Component of a large complex containing histone deacetylases such as HDAC2. Interacts with the acetylated forms of HSPA1A and HSPA1B. Interacts with HSPA8.

Its subcellular location is the nucleus. The protein resides in the cytoplasm. Its function is as follows. Atypical homeodomain protein which does not bind DNA and is required to modulate cardiac growth and development. Acts via its interaction with SRF, thereby modulating the expression of SRF-dependent cardiac-specific genes and cardiac development. Prevents SRF-dependent transcription either by inhibiting SRF binding to DNA or by recruiting histone deacetylase (HDAC) proteins that prevent transcription by SRF. Overexpression causes cardiac hypertrophy. Acts as a co-chaperone for HSPA1A and HSPA1B chaperone proteins and assists in chaperone-mediated protein refolding. The polypeptide is Homeodomain-only protein (HOPX) (Bos taurus (Bovine)).